The sequence spans 562 residues: Arginine--tRNA ligase (562 aa).

Positions 129–139 (ANPTGPLHVGH) match the 'HIGH' region motif.

Belongs to the class-I aminoacyl-tRNA synthetase family. Monomer.

The protein resides in the cytoplasm. The enzyme catalyses tRNA(Arg) + L-arginine + ATP = L-arginyl-tRNA(Arg) + AMP + diphosphate. The sequence is that of Arginine--tRNA ligase from Xanthomonas oryzae pv. oryzae (strain KACC10331 / KXO85).